The sequence spans 598 residues: Membrane protein insertase YidC (598 aa).

The helical transmembrane segment at 7–27 (NYFIAIALSVLIVLGWQFLYM) threads the bilayer. The disordered stretch occupies residues 37-76 (AQEAQKAQQQTEQVQQPAAGGQTPAQTSGAAPSGQAAATA). A compositionally biased stretch (low complexity) spans 40–76 (AQKAQQQTEQVQQPAAGGQTPAQTSGAAPSGQAAATA). The next 4 helical transmembrane spans lie at 377–397 (FGVAILCTTIVVKALFFPLAS), 447–467 (WPVALQIPIFFSLYKVIYITI), 492–512 (LFGLLPFEGPTLLHLGVWPLI), and 538–558 (WMPLVFMFMLASFPAGLVIYW).

Belongs to the OXA1/ALB3/YidC family. Type 1 subfamily. In terms of assembly, interacts with the Sec translocase complex via SecD. Specifically interacts with transmembrane segments of nascent integral membrane proteins during membrane integration.

The protein resides in the cell inner membrane. In terms of biological role, required for the insertion and/or proper folding and/or complex formation of integral membrane proteins into the membrane. Involved in integration of membrane proteins that insert both dependently and independently of the Sec translocase complex, as well as at least some lipoproteins. Aids folding of multispanning membrane proteins. This Rhizobium johnstonii (strain DSM 114642 / LMG 32736 / 3841) (Rhizobium leguminosarum bv. viciae) protein is Membrane protein insertase YidC.